The primary structure comprises 465 residues: Cytochrome P450 85A2 (465 aa).

Residues 2-22 (GIMMMILGLLVIIVCLCTALL) traverse the membrane as a helical segment. Residue C415 coordinates heme. A lipid anchor (S-farnesyl cysteine) is attached at C462. Residues 462–465 (CSPY) carry the Farnesylation CAAX motif motif.

It belongs to the cytochrome P450 family. Requires heme as cofactor. Isoprenylated (farnesylated); this addition of a 15-carbon farnesyl isoprenoid to the carboxy terminus is required for endoplasmic reticulum localization and essential for the biosynthesis of brassinolide. As to expression, expressed in stems, hypocotyls, leaves, siliques, shoots, and roots, with a higher expression in apical shoots.

It is found in the membrane. Its subcellular location is the endoplasmic reticulum. The enzyme catalyses 6-deoxoteasterone + reduced [NADPH--hemoprotein reductase] + O2 = 6alpha-hydroxyteasterone + oxidized [NADPH--hemoprotein reductase] + H2O + H(+). The catalysed reaction is 6alpha-hydroxytyphasterol + reduced [NADPH--hemoprotein reductase] + O2 = teasterone + oxidized [NADPH--hemoprotein reductase] + 2 H2O + H(+). It catalyses the reaction 3-dehydro-6-deoxoteasterone + reduced [NADPH--hemoprotein reductase] + O2 = 3-dehydro-6alpha-hydroxyteasterone + oxidized [NADPH--hemoprotein reductase] + H2O + H(+). It carries out the reaction 3-dehydro-6alpha-hydroxyteasterone + reduced [NADPH--hemoprotein reductase] + O2 = 3-dehydroteasterone + oxidized [NADPH--hemoprotein reductase] + 2 H2O + H(+). The enzyme catalyses 6-deoxotyphasterol + reduced [NADPH--hemoprotein reductase] + O2 = 6alpha-hydroxytyphasterol + oxidized [NADPH--hemoprotein reductase] + H2O + H(+). The catalysed reaction is 6alpha-hydroxytyphasterol + reduced [NADPH--hemoprotein reductase] + O2 = typhasterol + oxidized [NADPH--hemoprotein reductase] + 2 H2O + H(+). It catalyses the reaction 6-deoxocastasterone + reduced [NADPH--hemoprotein reductase] + O2 = 6alpha-hydroxycastasterone + oxidized [NADPH--hemoprotein reductase] + H2O + H(+). It carries out the reaction 6alpha-hydroxycastasterone + reduced [NADPH--hemoprotein reductase] + O2 = castasterone + oxidized [NADPH--hemoprotein reductase] + 2 H2O + H(+). The enzyme catalyses 6-deoxo-28-norteasterone + 2 reduced [NADPH--hemoprotein reductase] + 2 O2 = 28-norteasterone + 2 oxidized [NADPH--hemoprotein reductase] + 3 H2O + 2 H(+). The catalysed reaction is 6-deoxo-28-norteasterone + reduced [NADPH--hemoprotein reductase] + O2 = 6alpha-hydroxy-28-norteasterone + oxidized [NADPH--hemoprotein reductase] + H2O + H(+). It catalyses the reaction 6alpha-hydroxy-28-norteasterone + reduced [NADPH--hemoprotein reductase] + O2 = 28-norteasterone + oxidized [NADPH--hemoprotein reductase] + 2 H2O + H(+). It carries out the reaction 6-deoxo-28-nortyphasterol + 2 reduced [NADPH--hemoprotein reductase] + 2 O2 = 28-nortyphasterol + 2 oxidized [NADPH--hemoprotein reductase] + 3 H2O + 2 H(+). The enzyme catalyses 6-deoxo-28-nortyphasterol + reduced [NADPH--hemoprotein reductase] + O2 = 6alpha-hydroxy-28-nortyphasterol + oxidized [NADPH--hemoprotein reductase] + H2O + H(+). The catalysed reaction is 6alpha-hydroxy-28-nortyphasterol + reduced [NADPH--hemoprotein reductase] + O2 = 28-nortyphasterol + oxidized [NADPH--hemoprotein reductase] + 2 H2O + H(+). It catalyses the reaction 6-deoxo-28-norcastasterone + 2 reduced [NADPH--hemoprotein reductase] + 2 O2 = 28-norcastasterone + 2 oxidized [NADPH--hemoprotein reductase] + 3 H2O + 2 H(+). It carries out the reaction 6-deoxo-28-norcastasterone + reduced [NADPH--hemoprotein reductase] + O2 = 6alpha-hydroxy-28-norcastasterone + oxidized [NADPH--hemoprotein reductase] + H2O + H(+). The enzyme catalyses 6alpha-hydroxy-28-norcastasterone + reduced [NADPH--hemoprotein reductase] + O2 = 28-norcastasterone + oxidized [NADPH--hemoprotein reductase] + 2 H2O + H(+). The catalysed reaction is 3-dehydro-6-deoxo-28-norteasterone + 2 reduced [NADPH--hemoprotein reductase] + 2 O2 = 6-dehydro-28-norteasterone + 2 oxidized [NADPH--hemoprotein reductase] + 3 H2O + 2 H(+). It catalyses the reaction 3-dehydro-6-deoxo-28-norteasterone + reduced [NADPH--hemoprotein reductase] + O2 = 3-dehydro-6alpha-hydroxy-28-norteasterone + oxidized [NADPH--hemoprotein reductase] + H2O + H(+). It carries out the reaction 3-dehydro-6alpha-hydroxy-28-norteasterone + reduced [NADPH--hemoprotein reductase] + O2 = 6-dehydro-28-norteasterone + oxidized [NADPH--hemoprotein reductase] + 2 H2O + H(+). The enzyme catalyses teasterone + reduced [NADPH--hemoprotein reductase] + O2 = 7-oxateasterone + oxidized [NADPH--hemoprotein reductase] + H2O + H(+). The catalysed reaction is castasterone + reduced [NADPH--hemoprotein reductase] + O2 = brassinolide + oxidized [NADPH--hemoprotein reductase] + H2O + H(+). It catalyses the reaction typhasterol + reduced [NADPH--hemoprotein reductase] + O2 = 7-oxatyphasterol + oxidized [NADPH--hemoprotein reductase] + H2O + H(+). It carries out the reaction 6-deoxocastasterone + 2 reduced [NADPH--hemoprotein reductase] + 2 O2 = castasterone + 2 oxidized [NADPH--hemoprotein reductase] + 3 H2O + 2 H(+). The enzyme catalyses 6-deoxoteasterone + 2 reduced [NADPH--hemoprotein reductase] + 2 O2 = teasterone + 2 oxidized [NADPH--hemoprotein reductase] + 3 H2O + 2 H(+). The catalysed reaction is 6-deoxotyphasterol + 2 reduced [NADPH--hemoprotein reductase] + 2 O2 = typhasterol + 2 oxidized [NADPH--hemoprotein reductase] + 3 H2O + 2 H(+). It catalyses the reaction 3-dehydro-6-deoxoteasterone + 2 reduced [NADPH--hemoprotein reductase] + 2 O2 = 3-dehydroteasterone + 2 oxidized [NADPH--hemoprotein reductase] + 3 H2O + 2 H(+). It functions in the pathway plant hormone biosynthesis; brassinosteroid biosynthesis. In terms of biological role, mediates Baeyer-Villiger oxidation and catalyzes the C6-oxidation step and lactonization in brassinosteroids biosynthesis. Converts 6-deoxocastasterone (6-deoxoCS) to castasterone (CS), and castasterone to brassinolide (BL). May also convert 6-deoxoteasterone (6-deoxoTE) to teasterone (TE), 3-dehydro-6-deoxoteasterone (6-deoxo3DT, 6-deoxo-3-DHT) to 3-dehydroteasterone (3DT, 3-DHT), and 6-deoxotyphasterol (6-deoxoTY) to typhasterol (TY). Also seems to be able to convert teasterone (TE) and typhasterol (TY) to 7-oxateasterone (7-OXTE) and 7-oxatyphasterol (7-OXTY), respectively. Catalyzes the conversion of 6-deoxo-28-norteasterone (6-deoxo-28-norTE) to 28-norteasterone (28-norTE), 6-deoxo-28-nordeoxoteasterone (6-deoxo-28-nor-3-DHT) to 28-nordeoxoteasterone (28-nor-3-DHT), 6-deoxo-28-nortyphasterol (6-deoxo-28-norTY) to 28-nortyphasterol (28-norTY) and 6-deoxo-28-norcastasterone (6-deoxo-28-norCS) to 28-norcastasterone (28-norCS). Involved in a negative regulation of responses to abscisic acid (ABA) and drought tolerance. The protein is Cytochrome P450 85A2 (CYP85A2) of Arabidopsis thaliana (Mouse-ear cress).